Here is a 1216-residue protein sequence, read N- to C-terminus: ATP-dependent helicase/nuclease subunit A (1216 aa).

Residues 26–488 (QKKTAEQIEA…ILLKENFRSS (463 aa)) form the UvrD-like helicase ATP-binding domain. 47 to 54 (ASAGSGKT) contributes to the ATP binding site. Positions 515-802 (KHQLVFANTK…ELMTIHKSKG (288 aa)) constitute a UvrD-like helicase C-terminal domain.

Belongs to the helicase family. AddA subfamily. Heterodimer of AddA and AddB/RexB. Requires Mg(2+) as cofactor.

It carries out the reaction Couples ATP hydrolysis with the unwinding of duplex DNA by translocating in the 3'-5' direction.. The enzyme catalyses ATP + H2O = ADP + phosphate + H(+). The heterodimer acts as both an ATP-dependent DNA helicase and an ATP-dependent, dual-direction single-stranded exonuclease. Recognizes the chi site generating a DNA molecule suitable for the initiation of homologous recombination. The AddA nuclease domain is required for chi fragment generation; this subunit has the helicase and 3' -&gt; 5' nuclease activities. The polypeptide is ATP-dependent helicase/nuclease subunit A (Streptococcus pneumoniae (strain Hungary19A-6)).